Reading from the N-terminus, the 198-residue chain is Sporulation-specific protein 16 (198 aa).

Functionally, necessary for efficient spore formation. In Saccharomyces cerevisiae (strain ATCC 204508 / S288c) (Baker's yeast), this protein is Sporulation-specific protein 16 (SPO16).